Here is a 969-residue protein sequence, read N- to C-terminus: Leucine--tRNA ligase (969 aa).

The 'HIGH' region signature appears at 78–89 (PYPSGEGLHVGH). Positions 739-743 (KIGKS) match the 'KMSKS' region motif. K742 contacts ATP.

It belongs to the class-I aminoacyl-tRNA synthetase family.

It is found in the cytoplasm. It carries out the reaction tRNA(Leu) + L-leucine + ATP = L-leucyl-tRNA(Leu) + AMP + diphosphate. The chain is Leucine--tRNA ligase from Mycobacterium tuberculosis (strain ATCC 25177 / H37Ra).